A 438-amino-acid polypeptide reads, in one-letter code: 3-phosphoshikimate 1-carboxyvinyltransferase (438 aa).

3-phosphoshikimate is bound by residues Lys25, Ser26, and Arg30. Lys25 lines the phosphoenolpyruvate pocket. Phosphoenolpyruvate-binding residues include Gly99 and Arg128. Ser173, Gln175, Asp325, and Lys352 together coordinate 3-phosphoshikimate. Gln175 contacts phosphoenolpyruvate. The active-site Proton acceptor is Asp325. Phosphoenolpyruvate-binding residues include Arg356 and Arg398.

This sequence belongs to the EPSP synthase family. As to quaternary structure, monomer.

Its subcellular location is the cytoplasm. It carries out the reaction 3-phosphoshikimate + phosphoenolpyruvate = 5-O-(1-carboxyvinyl)-3-phosphoshikimate + phosphate. The protein operates within metabolic intermediate biosynthesis; chorismate biosynthesis; chorismate from D-erythrose 4-phosphate and phosphoenolpyruvate: step 6/7. Catalyzes the transfer of the enolpyruvyl moiety of phosphoenolpyruvate (PEP) to the 5-hydroxyl of shikimate-3-phosphate (S3P) to produce enolpyruvyl shikimate-3-phosphate and inorganic phosphate. The chain is 3-phosphoshikimate 1-carboxyvinyltransferase from Prochlorococcus marinus (strain MIT 9515).